The sequence spans 294 residues: 4-hydroxy-tetrahydrodipicolinate synthase (294 aa).

Thr-45 lines the pyruvate pocket. Residue Tyr-133 is the Proton donor/acceptor of the active site. Residue Lys-161 is the Schiff-base intermediate with substrate of the active site. Ile-203 is a pyruvate binding site.

The protein belongs to the DapA family. As to quaternary structure, homotetramer; dimer of dimers.

The protein localises to the cytoplasm. The enzyme catalyses L-aspartate 4-semialdehyde + pyruvate = (2S,4S)-4-hydroxy-2,3,4,5-tetrahydrodipicolinate + H2O + H(+). It functions in the pathway amino-acid biosynthesis; L-lysine biosynthesis via DAP pathway; (S)-tetrahydrodipicolinate from L-aspartate: step 3/4. Its function is as follows. Catalyzes the condensation of (S)-aspartate-beta-semialdehyde [(S)-ASA] and pyruvate to 4-hydroxy-tetrahydrodipicolinate (HTPA). The polypeptide is 4-hydroxy-tetrahydrodipicolinate synthase (Buchnera aphidicola subsp. Schizaphis graminum (strain Sg)).